Reading from the N-terminus, the 1044-residue chain is Ras GTPase-activating protein 1 (1044 aa).

Methionine 1 carries the post-translational modification N-acetylmethionine. A hydrophobic region spans residues methionine 1–glutamate 160. An SH2 1 domain is found at tryptophan 178 to valine 269. In terms of domain architecture, SH3 spans glutamate 276–arginine 338. Residues tryptophan 348–valine 438 enclose the SH2 2 domain. One can recognise a PH domain in the interval asparagine 471–asparagine 574. Positions asparagine 574–phenylalanine 687 constitute a C2 domain. Phosphotyrosine is present on tyrosine 612. Repeats lie at residues proline 646 to aspartate 664 and proline 665 to threonine 683. One can recognise a Ras-GAP domain in the interval lysine 761–leucine 971. Residue serine 828 is modified to Phosphoserine.

In terms of assembly, interacts with SQSTM1. Interacts with SPSB1; the interaction does not promote degradation. Interacts with CAV2 (tyrosine phosphorylated form). Directly interacts with NCK1. Interacts with PDGFRB (tyrosine phosphorylated). Interacts (via SH2 domain) with the 'Tyr-9' phosphorylated form of PDPK1. Interacts with tyrosine-phosphorylated EPHB4. Post-translationally, phosphorylated by SRC and LCK. The phosphorylation SRC inhibits its ability to stimulate the Ras-GTPase activity, whereas phosphorylation by LCK does not display any effect on stimulation activity.

It localises to the cytoplasm. Inhibitory regulator of the Ras-cyclic AMP pathway. Stimulates the GTPase of normal but not oncogenic Ras p21. The sequence is that of Ras GTPase-activating protein 1 (RASA1) from Bos taurus (Bovine).